A 160-amino-acid polypeptide reads, in one-letter code: Bcl-2-like gene 16 protein (160 aa).

Residues 64 to 84 carry the BH1 motif; sequence LLTTEHTTNWGKVVAMLSFSA.

The protein belongs to the Bcl-2 family.

This Saimiri sciureus (Common squirrel monkey) protein is Bcl-2-like gene 16 protein (16).